We begin with the raw amino-acid sequence, 97 residues long: Integration host factor subunit alpha (97 aa).

The disordered stretch occupies residues 50–71 (FGNFTLRDKPQRPGRNPKTGEE).

It belongs to the bacterial histone-like protein family. Heterodimer of an alpha and a beta chain.

Functionally, this protein is one of the two subunits of integration host factor, a specific DNA-binding protein that functions in genetic recombination as well as in transcriptional and translational control. The polypeptide is Integration host factor subunit alpha (Legionella pneumophila (strain Paris)).